Reading from the N-terminus, the 688-residue chain is Elongation factor G (688 aa).

The region spanning 8-282 (EKFRNFGIMA…GVVDYLPSPL (275 aa)) is the tr-type G domain. Residues 17 to 24 (AHIDAGKT), 81 to 85 (DTPGH), and 135 to 138 (NKMD) each bind GTP.

It belongs to the TRAFAC class translation factor GTPase superfamily. Classic translation factor GTPase family. EF-G/EF-2 subfamily.

Its subcellular location is the cytoplasm. Functionally, catalyzes the GTP-dependent ribosomal translocation step during translation elongation. During this step, the ribosome changes from the pre-translocational (PRE) to the post-translocational (POST) state as the newly formed A-site-bound peptidyl-tRNA and P-site-bound deacylated tRNA move to the P and E sites, respectively. Catalyzes the coordinated movement of the two tRNA molecules, the mRNA and conformational changes in the ribosome. The polypeptide is Elongation factor G (Clostridium perfringens (strain 13 / Type A)).